The following is a 72-amino-acid chain: UPF0352 protein NTHI1007 (72 aa).

Belongs to the UPF0352 family.

The polypeptide is UPF0352 protein NTHI1007 (Haemophilus influenzae (strain 86-028NP)).